We begin with the raw amino-acid sequence, 871 residues long: MALEQALQAARRGDLDVLRSLHAAGLLGPSLRDSLDALPVHHAARSGKLHCLRYLVEEVALPAVSRARNGATPAHDAAATGYLSCLQWLLTQGGCRVQEKDNSGATVLHLAARFGHPDVVKWLLYQGGANSAITTDTGALPIHYAAAKGDLPSLKLLVGHYPEGVNAQTNNGATPLYLACQEGHLEVTKYLVQECSADPHLRAQDGMTPLHAAAQMGHNPVLVWLVSFADVSFSEQDHDGATAMHFAASRGHTKVLSWLLLHGAEISQDLWGGTPLHDAAENGELECCQILAVNGAGLDVRDHDGYTAADLAEFNGHTHCSRYLRTVQTLSLEHRVLSRDQSMDLEAKQLDSGMSSPNTTMSVQPMTFDLGSPTSTFSNYDSCSSSHSSSKGQRSNRGIPGARAADLQSYMDMLNPEKSLPRGKLGKPSPPPPPPPPPPSFPPPPPPTGTQPPPPPPGYPAPNPPVGLHLNNIYMQTKNKLRHVEVDSLKEPKVELNDQFAQPSSGDGHSGLHRQDSGLLRQDSELLHRQELLRHSTGLRRQDSDRKQRSFSKQPSTGDYYRQLGRSPGEPLAARPGMAHSEEAALLPGNHVHNGCSADSKASRELPPPPPPPPLPEALSSPPPAPPLPIEGAGAACGQRRSSSSTGKVRVLRHRKSTKSFNMMSPTGDNSELLAEIKAGKSLKPTPQSKGLTTVFSGSGQPASQPESPQPLVSPAPSRTRSPTPPASGSQPLLNGSVVPAPPATPAPGVHLDVEALIPTLDEQGRPIPEWKRQVMVRKLQQKMQEEEEQRRKEEEEEARLASLPAWRRDILRKKLEEEREQKRKEEERQKLEEIQRAKEQSEKLRTLGYDEAKLAPWQRQVILKKGEIPK.

9 ANK repeats span residues 1–31, 35–66, 69–99, 103–132, 137–167, 171–201, 205–235, 239–268, and 271–300; these read MALEQALQAARRGDLDVLRSLHAAGLLGPSL, LDALPVHHAARSGKLHCLRYLVEEVALPAVSR, NGATPAHDAAATGYLSCLQWLLTQGGCRVQE, SGATVLHLAARFGHPDVVKWLLYQGGANSA, TGALPIHYAAAKGDLPSLKLLVGHYPEGVNA, NGATPLYLACQEGHLEVTKYLVQECSADPHL, DGMTPLHAAAQMGHNPVLVWLVSFADVSFSE, DGATAMHFAASRGHTKVLSWLLLHGAEISQ, and WGGTPLHDAAENGELECCQILAVNGAGLDV. A phosphoserine mark is found at serine 338 and serine 342. Disordered regions lie at residues 349-400, 416-469, 493-750, and 819-850; these read QLDS…RGIP, PEKS…VGLH, KVEL…APGV, and EREQKRKEEERQKLEEIQRAKEQSEKLRTLGY. The span at 352–365 shows a compositional bias: polar residues; the sequence is SGMSSPNTTMSVQP. The segment covering 377–395 has biased composition (low complexity); that stretch reads FSNYDSCSSSHSSSKGQRS. Over residues 428–465 the composition is skewed to pro residues; it reads PSPPPPPPPPPPSFPPPPPPTGTQPPPPPPGYPAPNPP. Serine 517, serine 524, and serine 556 each carry phosphoserine. A compositionally biased stretch (basic and acidic residues) spans 522-548; that stretch reads QDSELLHRQELLRHSTGLRRQDSDRKQ. The segment covering 606 to 629 has biased composition (pro residues); the sequence is LPPPPPPPPLPEALSSPPPAPPLP. Composition is skewed to polar residues over residues 659–670 and 685–707; these read KSFNMMSPTGDN and PTPQSKGLTTVFSGSGQPASQPE. A Phosphoserine modification is found at serine 665. The region spanning 669–686 is the WH2 domain; that stretch reads DNSELLAEIKAGKSLKPT. 3 positions are modified to phosphoserine: serine 704, serine 708, and serine 714. Residues 772-848 adopt a coiled-coil conformation; the sequence is KRQVMVRKLQ…KEQSEKLRTL (77 aa).

Monomer. Binds F-actin in a Ca(2+)-resistant fashion. Interacts (via N-terminus) with BAIAP2 (via SH3-domain). Interacts with PFN2. Interacts with MYO3A (via C-terminus). Interacts with MYO3B (via C-terminus). Expressed at high concentration in the microvillar parallel actin bundle (PAB) of hair cells stereocilia in the cochlea and vestibular system. Detected also at high levels of a number of other sensory cell types, including taste receptor cells, solitary chemoreceptor cells, vomeronasal sensory neurons and Merkel cells. Isoforms 2, 3, 4 and 5 are expressed in Purkinje cells dendritic spines. Expressed in utricle hair bundles (at protein level).

It localises to the cytoplasm. Its subcellular location is the cytoskeleton. The protein resides in the cell projection. The protein localises to the stereocilium. It is found in the microvillus. It localises to the cell junction. Its subcellular location is the dendritic spine. Functionally, multifunctional actin-bundling protein. Plays a major role in regulating the organization, dimension, dynamics and signaling capacities of the actin filament-rich microvilli in the mechanosensory and chemosensory cells. Required for the assembly and stabilization of the stereociliary parallel actin bundles. Plays a crucial role in the formation and maintenance of inner ear hair cell stereocilia. Involved in the elongation of actin in stereocilia. In extrastriolar hair cells, required for targeting MYO3B to stereocilia tips, and for regulation of stereocilia diameter and staircase formation. The sequence is that of Espin (Espn) from Mus musculus (Mouse).